The chain runs to 209 residues: Pyridoxine/pyridoxamine 5'-phosphate oxidase (209 aa).

Residues R7–Y10 and K64 each bind substrate. Residues R59 to K64, F74 to T75, R80, and K81 each bind FMN. Y121, R125, and S129 together coordinate substrate. FMN-binding positions include Q138–S139 and W182. R188 to H190 contacts substrate. Position 192 (R192) interacts with FMN.

The protein belongs to the pyridoxamine 5'-phosphate oxidase family. In terms of assembly, homodimer. Requires FMN as cofactor.

It catalyses the reaction pyridoxamine 5'-phosphate + O2 + H2O = pyridoxal 5'-phosphate + H2O2 + NH4(+). The catalysed reaction is pyridoxine 5'-phosphate + O2 = pyridoxal 5'-phosphate + H2O2. Its pathway is cofactor metabolism; pyridoxal 5'-phosphate salvage; pyridoxal 5'-phosphate from pyridoxamine 5'-phosphate: step 1/1. The protein operates within cofactor metabolism; pyridoxal 5'-phosphate salvage; pyridoxal 5'-phosphate from pyridoxine 5'-phosphate: step 1/1. In terms of biological role, catalyzes the oxidation of either pyridoxine 5'-phosphate (PNP) or pyridoxamine 5'-phosphate (PMP) into pyridoxal 5'-phosphate (PLP). This is Pyridoxine/pyridoxamine 5'-phosphate oxidase from Actinobacillus pleuropneumoniae serotype 7 (strain AP76).